The sequence spans 403 residues: Cysteine desulfurase IscS (403 aa).

Residues 73 to 74, Asn153, Gln181, and 201 to 203 each bind pyridoxal 5'-phosphate; these read AT and SAH. The residue at position 204 (Lys204) is an N6-(pyridoxal phosphate)lysine. Residue Thr241 participates in pyridoxal 5'-phosphate binding. Residue Cys326 is the Cysteine persulfide intermediate of the active site. Cys326 provides a ligand contact to [2Fe-2S] cluster.

Belongs to the class-V pyridoxal-phosphate-dependent aminotransferase family. NifS/IscS subfamily. Homodimer. Forms a heterotetramer with IscU, interacts with other sulfur acceptors. Pyridoxal 5'-phosphate serves as cofactor.

It is found in the cytoplasm. The catalysed reaction is (sulfur carrier)-H + L-cysteine = (sulfur carrier)-SH + L-alanine. Its pathway is cofactor biosynthesis; iron-sulfur cluster biosynthesis. Master enzyme that delivers sulfur to a number of partners involved in Fe-S cluster assembly, tRNA modification or cofactor biosynthesis. Catalyzes the removal of elemental sulfur atoms from cysteine to produce alanine. Functions as a sulfur delivery protein for Fe-S cluster synthesis onto IscU, an Fe-S scaffold assembly protein, as well as other S acceptor proteins. The protein is Cysteine desulfurase IscS of Methylococcus capsulatus (strain ATCC 33009 / NCIMB 11132 / Bath).